We begin with the raw amino-acid sequence, 445 residues long: Alpha/beta hydrolase psoB (445 aa).

Residue serine 246 is the Nucleophile of the active site.

Belongs to the AB hydrolase superfamily. FUS2 hydrolase family. As to quaternary structure, homodimer.

It functions in the pathway secondary metabolite biosynthesis. In terms of biological role, alpha/beta hydrolase; part of the gene cluster that mediates the biosynthesis of pseurotin A, a competitive inhibitor of chitin synthase and an inducer of nerve-cell proliferation. The PKS-NRPS hybrid synthetase psoA is responsible for the biosynthesis of azaspirene, one of the first intermediates having the 1-oxa-7-azaspiro[4,4]-non-2-ene-4,6-dione core of pseurotin, via condensation of one acetyl-CoA, 4 malonyl-CoA, and a L-phenylalanine molecule. The dual-functional monooxygenase/methyltransferase psoF seems to be involved in the addition of the C3 methyl group onto the pseurotin scaffold. Azaspirene is then converted to synerazol through 4 steps including oxidation of C17 by the cytochrome P450 monooxygenase psoD, O-methylation of the hydroxy group of C8 by the methyltransferase psoC, and the trans-to-cis isomerization of the C13 olefin by the glutathione S-transferase psoE. The fourth step of synerazol production is performed by the dual-functional monooxygenase/methyltransferase psoF which seems to catalyze the epoxidation of the intermediate deepoxy-synerazol. Synerazol can be attacked by a water molecule nonenzymatically at two different positions to yield two diol products, pseurotin A and pseurotin D. The chain is Alpha/beta hydrolase psoB from Aspergillus fumigatus (strain ATCC MYA-4609 / CBS 101355 / FGSC A1100 / Af293) (Neosartorya fumigata).